The chain runs to 247 residues: Chymase (247 aa).

The first 19 residues, 1–19 (MLLLPLPLLLFFLCSRAEA), serve as a signal peptide directing secretion. Positions 20–21 (GE) are cleaved as a propeptide — activation peptide. Residues 22–245 (IIGGTECKPH…YRPWINKILQ (224 aa)) form the Peptidase S1 domain. Cys-51 and Cys-67 are joined by a disulfide. His-66 serves as the catalytic Charge relay system. Asn-80 and Asn-103 each carry an N-linked (GlcNAc...) asparagine glycan. Asp-110 acts as the Charge relay system in catalysis. 2 cysteine pairs are disulfide-bonded: Cys-144–Cys-209 and Cys-175–Cys-188. The active-site Charge relay system is the Ser-203.

Belongs to the peptidase S1 family. Granzyme subfamily.

It localises to the secreted. The protein resides in the cytoplasmic granule. The enzyme catalyses Preferential cleavage: Phe-|-Xaa &gt; Tyr-|-Xaa &gt; Trp-|-Xaa &gt; Leu-|-Xaa.. Major secreted protease of mast cells with suspected roles in vasoactive peptide generation, extracellular matrix degradation, and regulation of gland secretion. The protein is Chymase (CMA1) of Macaca fascicularis (Crab-eating macaque).